A 494-amino-acid chain; its full sequence is Xylan glycosyltransferase MUCI21 (494 aa).

Over 1 to 40 the chain is Cytoplasmic; the sequence is MRQNLKKVAQIKVDESKKLFPYVFRVKTSCGNCAKRSKPK. The helical; Signal-anchor for type II membrane protein transmembrane segment at 41–61 threads the bilayer; sequence LIYLLIFSLISSCFVFAPQLL. Over 62 to 494 the chain is Lumenal; the sequence is CFPYPSALFL…LIDAYAKSIR (433 aa). The N-linked (GlcNAc...) asparagine glycan is linked to Asn375.

This sequence belongs to the glycosyltransferase 61 family.

The protein resides in the golgi apparatus membrane. Its function is as follows. Glycosyletransferase required for the proper composition and structural properties of released seed coat mucilage. Required for the production of highly branched xylan polymers in seed coat mucilage. Facilitates the addition of xylose residues directly to the xylan backbone. Xylan with xylose side chains seems to be necessary for pectin attachment to the seed surface. Essential for xylan synthesis in seed coat epidermal (SCE) cells. In Arabidopsis thaliana (Mouse-ear cress), this protein is Xylan glycosyltransferase MUCI21.